Consider the following 314-residue polypeptide: 4-hydroxyproline 2-epimerase (314 aa).

C88 functions as the Proton acceptor in the catalytic mechanism. Substrate is bound by residues G89–H90, H208, and D232. C236 functions as the Proton donor in the catalytic mechanism. Position 237-238 (G237–T238) interacts with substrate.

It belongs to the proline racemase family. In terms of assembly, homodimer.

The enzyme catalyses trans-4-hydroxy-L-proline = cis-4-hydroxy-D-proline. Inhibited by iodoacetate, iodoacetamide and by high amounts (10 mM) of pyrrole-2-carboxylate (PYC). Not inhibited by PYC at 1 mM. In terms of biological role, allows intracellular utilization of 4-hydroxyproline, one of the major constituents of host collagen, by converting trans-4-hydroxy-L-proline (t4LHyp) to cis-4-hydroxy-D-proline (c4DHyp), which can be further metabolized by intracellular 4-hydroxy-D-proline oxidases. Strong B-cell mitogen. Plays an important role in the regulation of intra- and extracellular amino acid pools, allowing the bacterium to profit from host precursors and enzymatic pathways. Cannot use L-proline, trans-3-hydroxy-L-proline (t3LHyp) and pyrrolidone-5-carboxylate (P5C) as substrate. This Pseudomonas aeruginosa (strain ATCC 15692 / DSM 22644 / CIP 104116 / JCM 14847 / LMG 12228 / 1C / PRS 101 / PAO1) protein is 4-hydroxyproline 2-epimerase.